Consider the following 386-residue polypeptide: O-phospho-L-seryl-tRNA:Cys-tRNA synthase (386 aa).

Residues 89–90, N196, and 219–221 contribute to the pyridoxal 5'-phosphate site; these read AR and SGH. An N6-(pyridoxal phosphate)lysine modification is found at K222.

This sequence belongs to the SepCysS family. Homodimer. Interacts with SepRS. Pyridoxal 5'-phosphate is required as a cofactor.

The enzyme catalyses O-phospho-L-seryl-tRNA(Cys) + hydrogen sulfide + H(+) = L-cysteinyl-tRNA(Cys) + phosphate. Functionally, converts O-phospho-L-seryl-tRNA(Cys) (Sep-tRNA(Cys)) to L-cysteinyl-tRNA(Cys) (Cys-tRNA(Cys)). The sequence is that of O-phospho-L-seryl-tRNA:Cys-tRNA synthase from Methanosarcina mazei (strain ATCC BAA-159 / DSM 3647 / Goe1 / Go1 / JCM 11833 / OCM 88) (Methanosarcina frisia).